The sequence spans 416 residues: Gamma-glutamyl phosphate reductase (416 aa).

It belongs to the gamma-glutamyl phosphate reductase family.

The protein localises to the cytoplasm. The enzyme catalyses L-glutamate 5-semialdehyde + phosphate + NADP(+) = L-glutamyl 5-phosphate + NADPH + H(+). Its pathway is amino-acid biosynthesis; L-proline biosynthesis; L-glutamate 5-semialdehyde from L-glutamate: step 2/2. Its function is as follows. Catalyzes the NADPH-dependent reduction of L-glutamate 5-phosphate into L-glutamate 5-semialdehyde and phosphate. The product spontaneously undergoes cyclization to form 1-pyrroline-5-carboxylate. The chain is Gamma-glutamyl phosphate reductase from Salmonella paratyphi A (strain AKU_12601).